A 154-amino-acid chain; its full sequence is Cytochrome c-type biogenesis protein CcmE (154 aa).

Topologically, residues 1-8 (MTPQRKRR) are cytoplasmic. The helical; Signal-anchor for type II membrane protein transmembrane segment at 9-29 (LVMLAALAGGVGVAVALALAA) threads the bilayer. At 30 to 154 (LQQNINLFYS…GGTPAAEPQP (125 aa)) the chain is on the periplasmic side. The heme site is built by His-124 and Tyr-128. The segment at 130 to 154 (PPEAAHALKQGAATSGGTPAAEPQP) is disordered.

Belongs to the CcmE/CycJ family.

It is found in the cell inner membrane. Heme chaperone required for the biogenesis of c-type cytochromes. Transiently binds heme delivered by CcmC and transfers the heme to apo-cytochromes in a process facilitated by CcmF and CcmH. This chain is Cytochrome c-type biogenesis protein CcmE, found in Bordetella petrii (strain ATCC BAA-461 / DSM 12804 / CCUG 43448).